The sequence spans 54 residues: Lectin alpha-1 chain (54 aa).

It belongs to the leguminous lectin family. In terms of assembly, tetramer of two alpha and two beta chains.

This chain is Lectin alpha-1 chain, found in Lathyrus hirsutus (Rough pea).